The following is a 67-amino-acid chain: Large ribosomal subunit protein uL29 (67 aa).

The protein belongs to the universal ribosomal protein uL29 family.

This chain is Large ribosomal subunit protein uL29, found in Moorella thermoacetica (strain ATCC 39073 / JCM 9320).